Here is a 351-residue protein sequence, read N- to C-terminus: F-box protein At1g70590 (351 aa).

The segment at 1-60 (MKQRTWPCRSEGSRFSSLSFLKPHDKDKRSRISSINKATAKSTTSSRSSSSSSSSRPPSN) is disordered. Residues 32 to 41 (ISSINKATAK) are compositionally biased toward polar residues. Positions 42-59 (STTSSRSSSSSSSSRPPS) are enriched in low complexity. An F-box domain is found at 62 to 111 (FGDFSMLPYDILMKIAAPFSHPNLQAASLVCKSWRDALKPLRESMLLIRW). Residues 105 to 141 (SMLLIRWGKKYKHGRGGVRANLDKALDSFLKGAMRGS) form a Sel1-like repeat. The stretch at 142–175 (TLAMVDAGLVYWERGEKEKAVNLYRRASELGDAV) is one TPR repeat.

The sequence is that of F-box protein At1g70590 from Arabidopsis thaliana (Mouse-ear cress).